The primary structure comprises 126 residues: Acidic phospholipase A2 S1E6-b (126 aa).

The first 3 residues, 1–3 (VEG), serve as a signal peptide directing secretion. Intrachain disulfides connect Cys29-Cys119, Cys31-Cys47, Cys46-Cys98, Cys52-Cys126, Cys53-Cys91, Cys60-Cys84, and Cys78-Cys89. Positions 30, 32, and 34 each coordinate Ca(2+). His50 is an active-site residue. Asp51 contributes to the Ca(2+) binding site. The active site involves Asp92.

Homodimer. Requires Ca(2+) as cofactor. Expressed by the venom gland.

The protein resides in the secreted. The enzyme catalyses a 1,2-diacyl-sn-glycero-3-phosphocholine + H2O = a 1-acyl-sn-glycero-3-phosphocholine + a fatty acid + H(+). In terms of biological role, snake venom phospholipase that inhibits ADP-induced platelet aggregation. PLA2 catalyzes the calcium-dependent hydrolysis of the 2-acyl groups in 3-sn-phosphoglycerides. The sequence is that of Acidic phospholipase A2 S1E6-b from Calloselasma rhodostoma (Malayan pit viper).